Reading from the N-terminus, the 409-residue chain is Arginine biosynthesis bifunctional protein ArgJ (409 aa).

Thr165, Lys191, Thr202, Glu282, Asn404, and Thr409 together coordinate substrate. Residue Thr202 is the Nucleophile of the active site.

The protein belongs to the ArgJ family. As to quaternary structure, heterotetramer of two alpha and two beta chains.

The protein localises to the cytoplasm. The enzyme catalyses N(2)-acetyl-L-ornithine + L-glutamate = N-acetyl-L-glutamate + L-ornithine. The catalysed reaction is L-glutamate + acetyl-CoA = N-acetyl-L-glutamate + CoA + H(+). It functions in the pathway amino-acid biosynthesis; L-arginine biosynthesis; L-ornithine and N-acetyl-L-glutamate from L-glutamate and N(2)-acetyl-L-ornithine (cyclic): step 1/1. It participates in amino-acid biosynthesis; L-arginine biosynthesis; N(2)-acetyl-L-ornithine from L-glutamate: step 1/4. Catalyzes two activities which are involved in the cyclic version of arginine biosynthesis: the synthesis of N-acetylglutamate from glutamate and acetyl-CoA as the acetyl donor, and of ornithine by transacetylation between N(2)-acetylornithine and glutamate. This Parasynechococcus marenigrum (strain WH8102) protein is Arginine biosynthesis bifunctional protein ArgJ.